The following is a 77-amino-acid chain: Pollen allergen Amb p 5b (77 aa).

The N-terminal stretch at 1–22 is a signal peptide; the sequence is MNNEKNVSFEFIGSTNEVDEIK. Intrachain disulfides connect C26/C61, C33/C48, and C40/C54.

It is found in the secreted. This Ambrosia psilostachya (Western ragweed) protein is Pollen allergen Amb p 5b.